A 1218-amino-acid chain; its full sequence is Mgp-operon protein 3 (1218 aa).

Residues Met1–Ala25 form the signal peptide. 4 disordered regions span residues Gln109 to Asn129, His213 to Leu245, Glu262 to Ser353, and Gln411 to Thr440. Residues Asn116–Asn129 show a composition bias toward low complexity. Residues Gly217–Leu231 show a composition bias toward polar residues. The span at Asp265–Ala286 shows a compositional bias: basic and acidic residues. Over residues Ala301–Asn342 the composition is skewed to low complexity. Positions Gln411–Gly428 are enriched in polar residues. The chain crosses the membrane as a helical span at residues Val1121–Pro1141. Residues Asn1192 to Ala1204 show a composition bias toward low complexity. The interval Asn1192 to Ala1218 is disordered. The span at Pro1205–Ala1218 shows a compositional bias: pro residues.

It is found in the cell membrane. The sequence is that of Mgp-operon protein 3 from Mycoplasma pneumoniae (strain ATCC 29342 / M129 / Subtype 1) (Mycoplasmoides pneumoniae).